The primary structure comprises 142 residues: Organic hydroperoxide resistance protein-like 2 (142 aa).

Belongs to the OsmC/Ohr family.

In Staphylococcus saprophyticus subsp. saprophyticus (strain ATCC 15305 / DSM 20229 / NCIMB 8711 / NCTC 7292 / S-41), this protein is Organic hydroperoxide resistance protein-like 2.